A 271-amino-acid chain; its full sequence is Phosphatidylglycerol--prolipoprotein diacylglyceryl transferase (271 aa).

7 consecutive transmembrane segments (helical) span residues 25–45, 60–80, 103–123, 134–154, 181–201, 209–229, and 235–255; these read WYGI…KFFV, YFIW…ILIY, FVGI…IATL, WIFL…GRIG, PSQL…VYLA, GELI…CEFY, and GIGF…IMFI. Position 152 (arginine 152) interacts with a 1,2-diacyl-sn-glycero-3-phospho-(1'-sn-glycerol).

It belongs to the Lgt family.

Its subcellular location is the cell inner membrane. The catalysed reaction is L-cysteinyl-[prolipoprotein] + a 1,2-diacyl-sn-glycero-3-phospho-(1'-sn-glycerol) = an S-1,2-diacyl-sn-glyceryl-L-cysteinyl-[prolipoprotein] + sn-glycerol 1-phosphate + H(+). The protein operates within protein modification; lipoprotein biosynthesis (diacylglyceryl transfer). Catalyzes the transfer of the diacylglyceryl group from phosphatidylglycerol to the sulfhydryl group of the N-terminal cysteine of a prolipoprotein, the first step in the formation of mature lipoproteins. This Campylobacter jejuni subsp. jejuni serotype O:23/36 (strain 81-176) protein is Phosphatidylglycerol--prolipoprotein diacylglyceryl transferase.